The primary structure comprises 57 residues: Protein Ric1 (57 aa).

Helical transmembrane passes span 8-28 and 34-54; these read IPRLICSVIIPPVGVFFQVGC and INCLLTVLGYIPGVIHAVYIL.

It belongs to the UPF0057 (PMP3) family.

The protein resides in the membrane. The protein is Protein Ric1 (RIC1) of Phytophthora infestans (Potato late blight agent).